Here is a 219-residue protein sequence, read N- to C-terminus: Formate dehydrogenase 2 subunit beta (cytochrome c-553) (219 aa).

Positions 3–32 constitute a 4Fe-4S ferredoxin-type 1 domain; sequence KAFLIDTTRCTACRGCQLACKEWHDLPANV. Residues Cys12, Cys15, Cys18, Cys22, Cys74, Cys77, Cys82, Cys124, Cys141, Cys144, Cys156, and Cys160 each contribute to the [4Fe-4S] cluster site. Residues 132 to 171 form the 4Fe-4S ferredoxin-type 2 domain; sequence DPKTKRITKCDMCFDRVSAGMQPICVKTCPTGTMAFGERD.

As to quaternary structure, heterotrimer of cytochrome c3 FDH2C and formate dehydrogenase FDH2 alpha and beta subunits that forms the FdhABC(3) complex. It depends on [4Fe-4S] cluster as a cofactor.

Its subcellular location is the periplasm. Functionally, beta chain of the formate dehydrogenase (FDH) that catalyzes the reversible two-electron oxidation of formate to carbon dioxide. The beta chain is an electron transfer unit. The sequence is that of Formate dehydrogenase 2 subunit beta (cytochrome c-553) from Nitratidesulfovibrio vulgaris (strain ATCC 29579 / DSM 644 / CCUG 34227 / NCIMB 8303 / VKM B-1760 / Hildenborough) (Desulfovibrio vulgaris).